The following is a 378-amino-acid chain: Lysocardiolipin acyltransferase 1 (378 aa).

2 helical membrane passes run 9–29 (FVVA…GPFL) and 46–66 (IVAT…GAKV). The short motif at 85–90 (HRTRMD) is the HXXXXD motif element. The next 2 helical transmembrane spans lie at 302–322 (LRVL…PMGT) and 336–358 (FAAM…LIEL).

Belongs to the 1-acyl-sn-glycerol-3-phosphate acyltransferase family.

It is found in the endoplasmic reticulum membrane. The catalysed reaction is a 1-acyl-sn-glycero-3-phosphate + an acyl-CoA = a 1,2-diacyl-sn-glycero-3-phosphate + CoA. It catalyses the reaction a 1-acyl-sn-glycero-3-phospho-(1D-myo-inositol) + an acyl-CoA = a 1,2-diacyl-sn-glycero-3-phospho-(1D-myo-inositol) + CoA. It carries out the reaction 1-acyl-sn-glycero-3-phospho-(1'-sn-glycerol) + an acyl-CoA = a 1,2-diacyl-sn-glycero-3-phospho-(1'-sn-glycerol) + CoA. The enzyme catalyses 1-hexadecanoyl-sn-glycero-3-phosphate + (9Z)-octadecenoyl-CoA = 1-hexadecanoyl-2-(9Z-octadecenoyl)-sn-glycero-3-phosphate + CoA. The catalysed reaction is 1-(9Z-octadecenoyl)-sn-glycero-3-phosphate + (9Z)-octadecenoyl-CoA = 1,2-di-(9Z-octadecenoyl)-sn-glycero-3-phosphate + CoA. It catalyses the reaction 1-(9Z,12Z)-octadecadienoyl-sn-glycero-3-phosphate + (9Z)-octadecenoyl-CoA = 1-(9Z,12Z)-octadecadienoyl-2-(9Z)-octadecenoyl-sn-glycero-3-phosphate + CoA. It carries out the reaction 1-(9Z,12Z,15Z)-octadecatrienoyl-sn-glycero-3-phosphate + (9Z)-octadecenoyl-CoA = 1-(9Z,12Z,15Z)-octadecatrienoyl-2-(9Z)-octadecenoyl-sn-glycero-3-phosphate + CoA. The enzyme catalyses 1-(9Z-octadecenoyl)-sn-glycero-3-phosphate + hexadecanoyl-CoA = 1-(9Z)-octadecenoyl-2-hexadecanoyl-sn-glycero-3-phosphate + CoA. The catalysed reaction is 1-(9Z-octadecenoyl)-sn-glycero-3-phosphate + octadecanoyl-CoA = 1-(9Z-octadecenoyl)-2-octadecanoyl-sn-glycero-3-phosphate + CoA. It catalyses the reaction 1-acyl-sn-glycero-3-phospho-(1'-sn-glycerol) + (9Z)-octadecenoyl-CoA = 1-acyl-2-(9Z-octadecenoyl)-sn-glycero-3-phospho-(1'-sn-glycerol) + CoA. It carries out the reaction a 1-acyl-sn-glycero-3-phospho-(1D-myo-inositol) + (9Z)-octadecenoyl-CoA = a 1-acyl-2-(9Z-octadecenoyl)-sn-glycero-3-phospho-(1D-myo-inositol) + CoA. The enzyme catalyses 1-hexadecanoyl-sn-glycero-3-phospho-(1D-myo-inositol) + hexadecanoyl-CoA = 1,2-dihexadecanoyl-sn-glycero-3-phospho-(1D-myo-inositol) + CoA. The catalysed reaction is 1-hexadecanoyl-sn-glycero-3-phospho-(1D-myo-inositol) + octadecanoyl-CoA = 1-hexadecanoyl-2-octadecanoyl-sn-glycero-3-phospho-(1D-myo-inositol) + CoA. It catalyses the reaction 1-hexadecanoyl-sn-glycero-3-phospho-(1D-myo-inositol) + (9Z)-octadecenoyl-CoA = 1-hexadecanoyl-2-(9Z-octadecenoyl)-sn-glycero-3-phospho-(1D-myo-inositol) + CoA. It carries out the reaction 1-hexadecanoyl-sn-glycero-3-phospho-(1D-myo-inositol) + (9Z,12Z)-octadecadienoyl-CoA = 1-hexadecanoyl-2-(9Z,12Z-octadecadienoyl)-sn-glycero-3-phospho-(1D-myo-inositol) + CoA. The enzyme catalyses 1-hexadecanoyl-sn-glycero-3-phospho-(1D-myo-inositol) + (5Z,8Z,11Z,14Z)-eicosatetraenoyl-CoA = 1-hexadecanoyl-2-(5Z,8Z,11Z,14Z-eicosatetraenoyl)-sn-glycero-3-phospho-D-myo-inositol + CoA. The catalysed reaction is 1-hexadecanoyl-sn-glycero-3-phospho-(1'-sn-glycerol) + hexadecanoyl-CoA = 1,2-dihexadecanoyl-sn-glycero-3-phospho-(1'-sn-glycerol) + CoA. It catalyses the reaction 1-hexadecanoyl-sn-glycero-3-phospho-(1'-sn-glycerol) + octadecanoyl-CoA = 1-hexadecanoyl-2-octadecanoyl-sn-glycero-3-phospho-(1'-sn-glycerol) + CoA. It carries out the reaction 1-hexadecanoyl-sn-glycero-3-phospho-(1'-sn-glycerol) + (9Z)-octadecenoyl-CoA = 1-hexadecanoyl-2-(9Z-octadecenoyl)-sn-glycero-3-phospho-(1'-sn-glycerol) + CoA. The enzyme catalyses 1-hexadecanoyl-sn-glycero-3-phospho-(1'-sn-glycerol) + (9Z,12Z)-octadecadienoyl-CoA = 1-hexadecanoyl-2-(9Z,12Z-octadecadienoyl)-sn-glycero-3-phospho-(1'-sn-glycerol) + CoA. The catalysed reaction is 1-tetradecanoyl-sn-glycero-3-phospho-(1'-sn-glycerol) + (9Z)-octadecenoyl-CoA = 1-tetradecanoyl-2-(9Z-octadecenoyl)-sn-glycero-3-phospho-(1'-sn-glycerol) + CoA. It catalyses the reaction 1-octadecanoyl-sn-glycero-3-phospho-(1'-sn-glycerol) + (9Z)-octadecenoyl-CoA = 1-octadecanoyl-2-(9Z-octadecenoyl)-sn-glycero-3-phospho-(1'-sn-glycerol) + CoA. It carries out the reaction 1-(9Z-octadecenoyl)-sn-glycero-3-phospho-(1'-sn-glycerol) + (9Z)-octadecenoyl-CoA = 1,2-di-(9Z-octadecenoyl)-sn-glycero-3-phospho-(1'-sn-glycerol) + CoA. The enzyme catalyses 1-hexadecanoyl-sn-glycero-3-phospho-(1D-myo-inositol) + dodecanoyl-CoA = 1-hexadecanoyl-2-dodecanoyl-sn-glycero-3-phospho-(1D-myo-inositol) + CoA. The catalysed reaction is 1',3'-bis-[1-acyl-sn-glycero-3-phospho]-glycerol + (9Z)-octadecenoyl-CoA = 1'-[1-acyl-2-(9Z)-octadecenoyl-sn-glycero-3-phospho],3'-[1-acyl,2-hydroxy-sn-glycero-3-phospho]-glycerol + CoA. It catalyses the reaction 1'-[1,2-diacyl-sn-glycero-3-phospho],3'-[1-acyl-sn-glycero-3-phospho]-glycerol + (9Z)-octadecenoyl-CoA = 1'-[1,2-diacyl-sn-glycero-3-phospho],3'-[1-acyl,2-(9Z)-octadecenoyl-sn-glycero-3-phospho]-glycerol + CoA. It carries out the reaction 1'-[1,2-diacyl-sn-glycero-3-phospho],3'-[1-acyl-sn-glycero-3-phospho]-glycerol + (9Z,12Z)-octadecadienoyl-CoA = 1'-[1,2-diacyl-sn-glycero-3-phospho],3'-[1-acyl,2-(9Z,12Z)-octadecadienoyl-sn-glycero-3-phospho]-glycerol + CoA. The enzyme catalyses 1'-[1,2-diacyl-sn-glycero-3-phospho],3'-[1-acyl-sn-glycero-3-phospho]-glycerol + dodecanoyl-CoA = 1'-[1,2-diacyl-sn-glycero-3-phospho],3'-[1-acyl,2-dodecanoyl-sn-glycero-3-phospho]-glycerol + CoA. The catalysed reaction is 1',3'-bis-[1-acyl-sn-glycero-3-phospho]-glycerol + dodecanoyl-CoA = 1'-[1-acyl-2-dodecanoyl-sn-glycero-3-phospho],3'-[1-acyl,2-hydroxy-sn-glycero-3-phospho]-glycerol + CoA. It catalyses the reaction a 1-acyl-sn-glycero-3-phosphate + (9Z)-octadecenoyl-CoA = a 1-acyl-2-(9Z-octadecenoyl)-sn-glycero-3-phosphate + CoA. It carries out the reaction 1',3'-bis-[1-acyl-sn-glycero-3-phospho]-glycerol + (9Z,12Z)-octadecadienoyl-CoA = 1'-[1-acyl-2-(9Z,12Z)-octadecadienoyl-sn-glycero-3-phospho],3'-[1-acyl,2-hydroxy-sn-glycero-3-phospho]-glycerol + CoA. The enzyme catalyses 1',3'-bis-[1-acyl-sn-glycero-3-phospho]-glycerol + hexadecanoyl-CoA = 1'-[1-acyl-2-hexadecanoyl-sn-glycero-3-phospho],3'-[1-acyl,2-hydroxy-sn-glycero-3-phospho]-glycerol + CoA. The catalysed reaction is 1',3'-bis-[1-acyl-sn-glycero-3-phospho]-glycerol + octadecanoyl-CoA = 1'-[1-acyl-2-octadecanoyl-sn-glycero-3-phospho],3'-[1-acyl,2-hydroxy-sn-glycero-3-phospho]-glycerol + CoA. It catalyses the reaction 1'-[1,2-diacyl-sn-glycero-3-phospho],3'-[1-acyl-sn-glycero-3-phospho]-glycerol + octanoyl-CoA = 1'-[1,2-diacyl-sn-glycero-3-phospho],3'-[1-acyl,2-octanoyl-sn-glycero-3-phospho]-glycerol + CoA. It carries out the reaction 1',3'-bis-[1-acyl-sn-glycero-3-phospho]-glycerol + octanoyl-CoA = 1'-[1-acyl-2-octanoyl-sn-glycero-3-phospho],3'-[1-acyl,2-hydroxy-sn-glycero-3-phospho]-glycerol + CoA. The enzyme catalyses 1'-[1,2-diacyl-sn-glycero-3-phospho],3'-[1-acyl-sn-glycero-3-phospho]-glycerol + hexadecanoyl-CoA = 1'-[1,2-diacyl-sn-glycero-3-phospho],3'-[1-acyl,2-hexadecanoyl-sn-glycero-3-phospho]-glycerol + CoA. The catalysed reaction is 1'-[1,2-diacyl-sn-glycero-3-phospho],3'-[1-acyl-sn-glycero-3-phospho]-glycerol + (5Z,8Z,11Z,14Z)-eicosatetraenoyl-CoA = 1'-[1,2-diacyl-sn-glycero-3-phospho],3'-[1-acyl,2-(5Z,8Z,11Z,14Z)-eicosatetraenoyl-sn-glycero-3-phospho]-glycerol + CoA. It catalyses the reaction 1',3'-bis-[1-acyl-sn-glycero-3-phospho]-glycerol + (5Z,8Z,11Z,14Z)-eicosatetraenoyl-CoA = 1'-[1-acyl-2-(5Z,8Z,11Z,14Z)-eicosatetraenoyl-sn-glycero-3-phospho],3'-[1-acyl,2-hydroxy-sn-glycero-3-phospho]-glycerol + CoA. It carries out the reaction a 1-acyl-sn-glycero-3-phospho-(1D-myo-inositol) + octadecanoyl-CoA = a 1-acyl-2-octadecanoyl-sn-glycero-3-phospho-(1D-myo-inositol) + CoA. The enzyme catalyses a 2-acyl-sn-glycero-3-phospho-D-myo-inositol + octadecanoyl-CoA = 1-octadecanoyl-2-acyl-sn-glycero-3-phospho-1D-myo-inositol + CoA. The protein operates within phospholipid metabolism; CDP-diacylglycerol biosynthesis; CDP-diacylglycerol from sn-glycerol 3-phosphate: step 2/3. Exhibits acyl-CoA:lysocardiolipin acyltransferase (ALCAT) activity; catalyzes the reacylation of lyso-cardiolipin to cardiolipin (CL), a key step in CL remodeling. Recognizes both monolysocardiolipin and dilysocardiolipin as substrates with a preference for linoleoyl-CoA and oleoyl-CoA as acyl donors. Also exhibits 1-acyl-sn-glycerol-3-phosphate acyltransferase activity (AGPAT) activity; converts 1-acyl-sn-glycerol-3- phosphate (lysophosphatidic acid or LPA) into 1,2-diacyl-sn-glycerol-3- phosphate (phosphatidic acid or PA) by incorporating an acyl moiety at the sn-2 position of the glycerol backbone. Possesses both lysophosphatidylinositol acyltransferase (LPIAT) and lysophosphatidylglycerol acyltransferase (LPGAT) activities. Required for establishment of the hematopoietic and endothelial lineages. This Gallus gallus (Chicken) protein is Lysocardiolipin acyltransferase 1 (LCLAT1).